Consider the following 542-residue polypeptide: Probable cysteine proteinase 361L (542 aa).

Residues Cys172, His382, and Asn414 contribute to the active site. Residues 520–540 (TNNWYIYALIIIFILIIFFVL) form a helical membrane-spanning segment.

It belongs to the peptidase C1 family.

It is found in the membrane. Probable cysteine protease. This chain is Probable cysteine proteinase 361L, found in Acheta domesticus (House cricket).